Reading from the N-terminus, the 445-residue chain is Methylenetetrahydrofolate--tRNA-(uracil-5-)-methyltransferase TrmFO (445 aa).

An FAD-binding site is contributed by 10-15 (GGGLSG).

The protein belongs to the MnmG family. TrmFO subfamily. FAD serves as cofactor.

The protein resides in the cytoplasm. It catalyses the reaction uridine(54) in tRNA + (6R)-5,10-methylene-5,6,7,8-tetrahydrofolate + NADH + H(+) = 5-methyluridine(54) in tRNA + (6S)-5,6,7,8-tetrahydrofolate + NAD(+). The enzyme catalyses uridine(54) in tRNA + (6R)-5,10-methylene-5,6,7,8-tetrahydrofolate + NADPH + H(+) = 5-methyluridine(54) in tRNA + (6S)-5,6,7,8-tetrahydrofolate + NADP(+). Its function is as follows. Catalyzes the folate-dependent formation of 5-methyl-uridine at position 54 (M-5-U54) in all tRNAs. This is Methylenetetrahydrofolate--tRNA-(uracil-5-)-methyltransferase TrmFO from Lawsonia intracellularis (strain PHE/MN1-00).